We begin with the raw amino-acid sequence, 360 residues long: DNA replication and repair protein RecF (360 aa).

33-40 (GENGSGKT) is an ATP binding site.

The protein belongs to the RecF family.

Its subcellular location is the cytoplasm. Functionally, the RecF protein is involved in DNA metabolism; it is required for DNA replication and normal SOS inducibility. RecF binds preferentially to single-stranded, linear DNA. It also seems to bind ATP. The protein is DNA replication and repair protein RecF of Rickettsia africae (strain ESF-5).